The primary structure comprises 184 residues: ATP synthase subunit b, chloroplastic (184 aa).

A helical transmembrane segment spans residues 27–49; that stretch reads LATNLINLSVVLGVLIFFGKGVL.

The protein belongs to the ATPase B chain family. In terms of assembly, F-type ATPases have 2 components, F(1) - the catalytic core - and F(0) - the membrane proton channel. F(1) has five subunits: alpha(3), beta(3), gamma(1), delta(1), epsilon(1). F(0) has four main subunits: a(1), b(1), b'(1) and c(10-14). The alpha and beta chains form an alternating ring which encloses part of the gamma chain. F(1) is attached to F(0) by a central stalk formed by the gamma and epsilon chains, while a peripheral stalk is formed by the delta, b and b' chains.

It is found in the plastid. The protein localises to the chloroplast thylakoid membrane. Functionally, f(1)F(0) ATP synthase produces ATP from ADP in the presence of a proton or sodium gradient. F-type ATPases consist of two structural domains, F(1) containing the extramembraneous catalytic core and F(0) containing the membrane proton channel, linked together by a central stalk and a peripheral stalk. During catalysis, ATP synthesis in the catalytic domain of F(1) is coupled via a rotary mechanism of the central stalk subunits to proton translocation. In terms of biological role, component of the F(0) channel, it forms part of the peripheral stalk, linking F(1) to F(0). This is ATP synthase subunit b, chloroplastic from Manihot esculenta (Cassava).